The sequence spans 507 residues: ATP synthase subunit alpha, chloroplastic (507 aa).

ATP is bound at residue 170-177 (GDRQTGKT).

Belongs to the ATPase alpha/beta chains family. F-type ATPases have 2 components, CF(1) - the catalytic core - and CF(0) - the membrane proton channel. CF(1) has five subunits: alpha(3), beta(3), gamma(1), delta(1), epsilon(1). CF(0) has four main subunits: a, b, b' and c.

Its subcellular location is the plastid. It is found in the chloroplast thylakoid membrane. The enzyme catalyses ATP + H2O + 4 H(+)(in) = ADP + phosphate + 5 H(+)(out). In terms of biological role, produces ATP from ADP in the presence of a proton gradient across the membrane. The alpha chain is a regulatory subunit. This chain is ATP synthase subunit alpha, chloroplastic, found in Atropa belladonna (Belladonna).